A 370-amino-acid chain; its full sequence is TD and POZ domain-containing protein 4 (370 aa).

Residues Lys19–Val149 enclose the MATH domain. A BTB domain is found at Thr188–Val251.

Belongs to the Tdpoz family.

The polypeptide is TD and POZ domain-containing protein 4 (Mus musculus (Mouse)).